Reading from the N-terminus, the 145-residue chain is uncharacterized protein (145 aa).

Belongs to the methyltransferase superfamily.

Its function is as follows. Probable methyltransferase. This is an uncharacterized protein from Schizosaccharomyces pombe (strain 972 / ATCC 24843) (Fission yeast).